The sequence spans 310 residues: 26S proteasome non-ATPase regulatory subunit 14 (310 aa).

The MPN domain maps to 31–166 (VYISSLALLK…IDAFRLINAN (136 aa)). Zn(2+) contacts are provided by H113, H115, and D126. A JAMM motif motif is present at residues 113 to 126 (HSHPGFGCWLSGVD). Phosphoserine is present on residues S150 and S224. T266 carries the post-translational modification Phosphothreonine.

It belongs to the peptidase M67A family. PSMD14 subfamily. As to quaternary structure, component of the 19S proteasome regulatory particle complex. The 26S proteasome consists of a 20S core particle (CP) and two 19S regulatory subunits (RP). The regulatory particle is made of a lid composed of 9 subunits including PSMD4, a base containing 6 ATPases and few additional components. Within the complex, PSMD4 interacts with subunit PSMD7 through their respective MPN domain. Interacts with TXNL1. As to expression, widely expressed. Highest levels in heart and skeletal muscle.

In terms of biological role, component of the 26S proteasome, a multiprotein complex involved in the ATP-dependent degradation of ubiquitinated proteins. This complex plays a key role in the maintenance of protein homeostasis by removing misfolded or damaged proteins, which could impair cellular functions, and by removing proteins whose functions are no longer required. Therefore, the proteasome participates in numerous cellular processes, including cell cycle progression, apoptosis, or DNA damage repair. The PSMD14 subunit is a metalloprotease that specifically cleaves 'Lys-63'-linked polyubiquitin chains within the complex. Plays a role in response to double-strand breaks (DSBs): acts as a regulator of non-homologous end joining (NHEJ) by cleaving 'Lys-63'-linked polyubiquitin, thereby promoting retention of JMJD2A/KDM4A on chromatin and restricting TP53BP1 accumulation. Also involved in homologous recombination repair by promoting RAD51 loading. This Homo sapiens (Human) protein is 26S proteasome non-ATPase regulatory subunit 14 (PSMD14).